A 452-amino-acid polypeptide reads, in one-letter code: Pup--protein ligase (452 aa).

Position 9 (Glu9) interacts with Mg(2+). Residue Arg53 participates in ATP binding. Position 55 (Tyr55) interacts with Mg(2+). Catalysis depends on Asp57, which acts as the Proton acceptor. Glu63 provides a ligand contact to Mg(2+). Thr66 and Trp419 together coordinate ATP.

This sequence belongs to the Pup ligase/Pup deamidase family. Pup-conjugating enzyme subfamily.

The catalysed reaction is ATP + [prokaryotic ubiquitin-like protein]-L-glutamate + [protein]-L-lysine = ADP + phosphate + N(6)-([prokaryotic ubiquitin-like protein]-gamma-L-glutamyl)-[protein]-L-lysine.. The protein operates within protein degradation; proteasomal Pup-dependent pathway. It participates in protein modification; protein pupylation. Catalyzes the covalent attachment of the prokaryotic ubiquitin-like protein modifier Pup to the proteasomal substrate proteins, thereby targeting them for proteasomal degradation. This tagging system is termed pupylation. The ligation reaction involves the side-chain carboxylate of the C-terminal glutamate of Pup and the side-chain amino group of a substrate lysine. This chain is Pup--protein ligase, found in Parafrankia sp. (strain EAN1pec).